The following is a 309-amino-acid chain: Porphobilinogen deaminase (309 aa).

Residue C240 is modified to S-(dipyrrolylmethanemethyl)cysteine.

The protein belongs to the HMBS family. Monomer. The cofactor is dipyrromethane.

The catalysed reaction is 4 porphobilinogen + H2O = hydroxymethylbilane + 4 NH4(+). Its pathway is porphyrin-containing compound metabolism; protoporphyrin-IX biosynthesis; coproporphyrinogen-III from 5-aminolevulinate: step 2/4. Tetrapolymerization of the monopyrrole PBG into the hydroxymethylbilane pre-uroporphyrinogen in several discrete steps. The sequence is that of Porphobilinogen deaminase from Lawsonia intracellularis (strain PHE/MN1-00).